The following is a 157-amino-acid chain: Eukaryotic translation initiation factor 5A-2 (157 aa).

S2 is subject to N-acetylserine. S2 bears the Phosphoserine mark. T7 is modified (phosphothreonine). K51 bears the Hypusine mark. At S74 the chain carries Phosphoserine. K86 participates in a covalent cross-link: Glycyl lysine isopeptide (Lys-Gly) (interchain with G-Cter in ubiquitin).

It belongs to the eIF-5A family. As to quaternary structure, homodimer. Binds to 80S ribosomes. Actively translating ribosomes show mutually exclusive binding of eIF5a (HYP2 or ANB1) and EFT1/eEF2. Interacts with DYS1 and LIA1. Lys-51 undergoes hypusination, a unique post-translational modification that consists in the addition of a butylamino group from spermidine to lysine side chain, leading to the formation of the unusual amino acid hypusine. eIF-5As are the only known proteins to undergo this modification, which is essential for their function.

The protein resides in the cytoplasm. Functionally, translation factor that promotes translation elongation and termination, particularly upon ribosome stalling at specific amino acid sequence contexts. Binds between the exit (E) and peptidyl (P) site of the ribosome and promotes rescue of stalled ribosome: specifically required for efficient translation of polyproline-containing peptides as well as other motifs that stall the ribosome. Acts as ribosome quality control (RQC) cofactor by joining the RQC complex to facilitate peptidyl transfer during CAT tailing step. Involved in actin dynamics and cell cycle progression, mRNA decay and probably in a pathway involved in stress response and maintenance of cell wall integrity. The chain is Eukaryotic translation initiation factor 5A-2 (ANB1) from Saccharomyces cerevisiae (strain ATCC 204508 / S288c) (Baker's yeast).